The primary structure comprises 248 residues: Ribosomal RNA small subunit methyltransferase J (248 aa).

S-adenosyl-L-methionine is bound by residues 98 to 99 (RD), 114 to 115 (ER), 150 to 151 (SS), and Asp-168.

It belongs to the methyltransferase superfamily. RsmJ family.

The protein localises to the cytoplasm. It catalyses the reaction guanosine(1516) in 16S rRNA + S-adenosyl-L-methionine = N(2)-methylguanosine(1516) in 16S rRNA + S-adenosyl-L-homocysteine + H(+). Its function is as follows. Specifically methylates the guanosine in position 1516 of 16S rRNA. The sequence is that of Ribosomal RNA small subunit methyltransferase J from Shewanella baltica (strain OS195).